A 678-amino-acid chain; its full sequence is Elongation factor G 2 (678 aa).

Residues 4–278 enclose the tr-type G domain; the sequence is QKLRNIGIIA…AVVDYLPSPQ (275 aa). Residues 13–20, 77–81, and 131–134 contribute to the GTP site; these read AHVDAGKT, DTPGH, and NKMD.

Belongs to the TRAFAC class translation factor GTPase superfamily. Classic translation factor GTPase family. EF-G/EF-2 subfamily.

It is found in the cytoplasm. Catalyzes the GTP-dependent ribosomal translocation step during translation elongation. During this step, the ribosome changes from the pre-translocational (PRE) to the post-translocational (POST) state as the newly formed A-site-bound peptidyl-tRNA and P-site-bound deacylated tRNA move to the P and E sites, respectively. Catalyzes the coordinated movement of the two tRNA molecules, the mRNA and conformational changes in the ribosome. This is Elongation factor G 2 from Hahella chejuensis (strain KCTC 2396).